A 397-amino-acid polypeptide reads, in one-letter code: Lysophospholipid transporter LplT (397 aa).

Over 1–17 (MSESVHTNTSLWSKGMK) the chain is Periplasmic. A helical membrane pass occupies residues 18–38 (AVIVAQFLSAFGDNALLFATL). The Cytoplasmic portion of the chain corresponds to 39 to 52 (ALLKAQFYPEWSQP). Residues 53 to 73 (ILQMVFVGAYILFAPFVGQVA) form a helical membrane-spanning segment. Over 74–90 (DSFAKGRVMMFANGLKL) the chain is Periplasmic. Residues 91 to 111 (LGAASICFGINPFLGYTLVGV) form a helical membrane-spanning segment. The Cytoplasmic portion of the chain corresponds to 112-144 (GAAAYSPAKYGILGELTTGSKLVKANGLMEAST). A helical membrane pass occupies residues 145-165 (IAAILLGSVAGGVLADWHVLV). A topological domain (periplasmic) is located at residue alanine 166. Residues 167–187 (LAACALAYGGAVVANIYIPKL) traverse the membrane as a helical segment. Residues 188-226 (AAARPGQSWNLINMTRSFLNACTSLWRNGETRFSLVGTS) lie on the Cytoplasmic side of the membrane. A helical transmembrane segment spans residues 227 to 247 (LFWGAGVTLRFLLVLWVPVAL). The Periplasmic portion of the chain corresponds to 248-256 (GITDNATPT). A helical transmembrane segment spans residues 257–277 (YLNAMVAIGIVVGAGAAAKLV). Topologically, residues 278–280 (TLE) are cytoplasmic. The helical transmembrane segment at 281-301 (TVSRCMPAGILIGVVVLIFSL) threads the bilayer. The Periplasmic portion of the chain corresponds to 302–304 (QHE). A helical membrane pass occupies residues 305–325 (LLPAYALLMLIGVLGGFFVVP). At 326-343 (LNALLQERGKKSVGAGNA) the chain is on the cytoplasmic side. Residues 344–364 (IAVQNLGENSAMLLMLGIYSL) form a helical membrane-spanning segment. The Periplasmic segment spans residues 365 to 366 (AV). Residues 367 to 387 (MVGIPVVPIGIGFGALFALAI) form a helical membrane-spanning segment. Over 388–397 (TALWIWQRRH) the chain is Cytoplasmic.

This sequence belongs to the major facilitator superfamily. LplT (TC 2.A.1.42) family.

It is found in the cell inner membrane. Functionally, catalyzes the facilitated diffusion of 2-acyl-glycero-3-phosphoethanolamine (2-acyl-GPE) into the cell. The chain is Lysophospholipid transporter LplT from Escherichia coli (strain SMS-3-5 / SECEC).